We begin with the raw amino-acid sequence, 451 residues long: Exodeoxyribonuclease 7 large subunit (451 aa).

It belongs to the XseA family. As to quaternary structure, heterooligomer composed of large and small subunits.

The protein localises to the cytoplasm. The enzyme catalyses Exonucleolytic cleavage in either 5'- to 3'- or 3'- to 5'-direction to yield nucleoside 5'-phosphates.. Its function is as follows. Bidirectionally degrades single-stranded DNA into large acid-insoluble oligonucleotides, which are then degraded further into small acid-soluble oligonucleotides. The polypeptide is Exodeoxyribonuclease 7 large subunit (Neisseria meningitidis serogroup B (strain ATCC BAA-335 / MC58)).